A 376-amino-acid polypeptide reads, in one-letter code: Salivary hyaluronidase (376 aa).

The N-terminal stretch at 1–16 (MNWIFHLFCAVYGIFC) is a signal peptide. 2 disulfides stabilise this stretch: Cys-32-Cys-328 and Cys-203-Cys-217. 4 N-linked (GlcNAc...) asparagine glycosylation sites follow: Asn-36, Asn-55, Asn-77, and Asn-88. The active-site Proton donor is Glu-118. Asn-143, Asn-153, Asn-181, Asn-214, Asn-226, Asn-248, Asn-287, Asn-321, Asn-336, Asn-356, and Asn-371 each carry an N-linked (GlcNAc...) asparagine glycan.

It belongs to the glycosyl hydrolase 56 family. In terms of processing, glycosylated; glycosylation is critical for enzymatic activity. As to expression, female salivary gland (at protein level).

It is found in the secreted. The enzyme catalyses Random hydrolysis of (1-&gt;4)-linkages between N-acetyl-beta-D-glucosamine and D-glucuronate residues in hyaluronate.. In terms of biological role, hydrolyzes high molecular weight hyaluronic acid to produce small oligosaccharides. Up-regulates expression of CSF2, CSF3, LIF, CXCL1, CXCL2 and CXCL8 in cultured human dermal microvascular endothelial cells. Promotes host neutrophil recruitment at the injection site. (Microbial infection) Probably promotes Leishmania major infection in the host. This chain is Salivary hyaluronidase, found in Lutzomyia longipalpis (Sand fly).